A 477-amino-acid polypeptide reads, in one-letter code: Lactate utilization protein B (477 aa).

4Fe-4S ferredoxin-type domains lie at 304–334 (GTQFQSILQCIRCAACVNVCPVYRQTGGHSY) and 353–382 (YDTYKELPYASTLCGACTEACPVKIPLHDL). 7 residues coordinate [4Fe-4S] cluster: Cys-313, Cys-316, Cys-319, Cys-323, Cys-366, Cys-369, and Cys-373. The disordered stretch occupies residues 443–463 (GPKPLQAWTNSRDFPMPDDEN).

This sequence belongs to the LutB/YkgF family.

Is involved in L-lactate degradation and allows cells to grow with lactate as the sole carbon source. Has probably a role as an electron transporter during oxidation of L-lactate. In Macrococcus caseolyticus (strain JCSC5402) (Macrococcoides caseolyticum), this protein is Lactate utilization protein B.